The sequence spans 456 residues: Hydroxyproline dehydrogenase (456 aa).

K310 and K320 each carry N6-acetyllysine.

The protein belongs to the proline oxidase family. FAD serves as cofactor.

It carries out the reaction trans-4-hydroxy-L-proline + a quinone = (3R,5S)-1-pyrroline-3-hydroxy-5-carboxylate + a quinol + H(+). It catalyses the reaction L-proline + a quinone = (S)-1-pyrroline-5-carboxylate + a quinol + H(+). In terms of biological role, dehydrogenase that converts trans-4-L-hydroxyproline to delta-1-pyrroline-3-hydroxy-5-carboxylate (Hyp) using ubiquinone-10 as the terminal electron acceptor. Can also use proline as a substrate but with a very much lower efficiency. Does not react with other diastereomers of Hyp: trans-4-D-hydroxyproline and cis-4-L-hydroxyproline. Ubiquininone analogs such as menadione, duroquinone and ubiquinone-1 react more efficiently than oxygen as the terminal electron acceptor during catalysis. The chain is Hydroxyproline dehydrogenase from Mus musculus (Mouse).